A 152-amino-acid polypeptide reads, in one-letter code: Xanthine-guanine phosphoribosyltransferase (152 aa).

Residues Arg-37–Gly-38, Arg-69, and Asp-88–Thr-96 each bind 5-phospho-alpha-D-ribose 1-diphosphate. Arg-69 is a binding site for GMP. Position 89 (Asp-89) interacts with Mg(2+). Residues Asp-92 and Ile-135 each contribute to the guanine site. Xanthine contacts are provided by Asp-92 and Ile-135. Residues Asp-92 to Thr-96 and Trp-134 to Ile-135 contribute to the GMP site.

It belongs to the purine/pyrimidine phosphoribosyltransferase family. XGPT subfamily. As to quaternary structure, homotetramer. Requires Mg(2+) as cofactor.

It is found in the cell inner membrane. It catalyses the reaction GMP + diphosphate = guanine + 5-phospho-alpha-D-ribose 1-diphosphate. It carries out the reaction XMP + diphosphate = xanthine + 5-phospho-alpha-D-ribose 1-diphosphate. The enzyme catalyses IMP + diphosphate = hypoxanthine + 5-phospho-alpha-D-ribose 1-diphosphate. It functions in the pathway purine metabolism; GMP biosynthesis via salvage pathway; GMP from guanine: step 1/1. It participates in purine metabolism; XMP biosynthesis via salvage pathway; XMP from xanthine: step 1/1. Purine salvage pathway enzyme that catalyzes the transfer of the ribosyl-5-phosphate group from 5-phospho-alpha-D-ribose 1-diphosphate (PRPP) to the N9 position of the 6-oxopurines guanine and xanthine to form the corresponding ribonucleotides GMP (guanosine 5'-monophosphate) and XMP (xanthosine 5'-monophosphate), with the release of PPi. To a lesser extent, also acts on hypoxanthine. The protein is Xanthine-guanine phosphoribosyltransferase of Edwardsiella ictaluri (strain 93-146).